We begin with the raw amino-acid sequence, 294 residues long: MYNIFKGLITALITPFKDNKLDLYALENILNQQIKHKIDAVLIAGSTGEANSLSFEEYKLLLKTSVDIVNNRMPIISGCSSNNTAYAIELAIESKKIGVDCFMASPPSYVKPTQHGIYKHFEALHEACNLPIMLYSAPTRSGVDFSDETILRLSKLPRILALKDCGVDLERPMRIRAIVKGDFNILTGNDEVVLAFHAQGVVGWISVTSNIAPKLCKELLEKWYNNDTQGALEIHQKLLPLYKALFLESNPIPVKYAAYYLGLCENEIRLPLTEASDSAKKQIKKIITSLSIKI.

T47 serves as a coordination point for pyruvate. The Proton donor/acceptor role is filled by Y135. K163 functions as the Schiff-base intermediate with substrate in the catalytic mechanism. I205 provides a ligand contact to pyruvate.

This sequence belongs to the DapA family. Homotetramer; dimer of dimers.

Its subcellular location is the cytoplasm. The enzyme catalyses L-aspartate 4-semialdehyde + pyruvate = (2S,4S)-4-hydroxy-2,3,4,5-tetrahydrodipicolinate + H2O + H(+). The protein operates within amino-acid biosynthesis; L-lysine biosynthesis via DAP pathway; (S)-tetrahydrodipicolinate from L-aspartate: step 3/4. Functionally, catalyzes the condensation of (S)-aspartate-beta-semialdehyde [(S)-ASA] and pyruvate to 4-hydroxy-tetrahydrodipicolinate (HTPA). This chain is 4-hydroxy-tetrahydrodipicolinate synthase, found in Rickettsia prowazekii (strain Madrid E).